The primary structure comprises 432 residues: uncharacterized protein (432 aa).

Disordered stretches follow at residues 37–61 (DGIG…SADC), 127–151 (RDHD…DTRY), and 298–378 (SVSS…NHQC). A compositionally biased stretch (polar residues) spans 312–335 (DSSTLANTQGFREDQSQQQHTPSP). Positions 341–366 (SSLSHQFHQSIHQSHQHHQSIYQSQH) are enriched in low complexity.

This is an uncharacterized protein from Arabidopsis thaliana (Mouse-ear cress).